A 169-amino-acid chain; its full sequence is S-ribosylhomocysteine lyase (169 aa).

Fe cation-binding residues include His54, His58, and Cys129.

It belongs to the LuxS family. Homodimer. Requires Fe cation as cofactor.

The catalysed reaction is S-(5-deoxy-D-ribos-5-yl)-L-homocysteine = (S)-4,5-dihydroxypentane-2,3-dione + L-homocysteine. Functionally, involved in the synthesis of autoinducer 2 (AI-2) which is secreted by bacteria and is used to communicate both the cell density and the metabolic potential of the environment. The regulation of gene expression in response to changes in cell density is called quorum sensing. Catalyzes the transformation of S-ribosylhomocysteine (RHC) to homocysteine (HC) and 4,5-dihydroxy-2,3-pentadione (DPD). The chain is S-ribosylhomocysteine lyase from Haemophilus ducreyi (strain 35000HP / ATCC 700724).